A 326-amino-acid chain; its full sequence is Lipoyl synthase (326 aa).

[4Fe-4S] cluster contacts are provided by Cys-74, Cys-79, Cys-85, Cys-100, Cys-104, Cys-107, and Ser-314. In terms of domain architecture, Radical SAM core spans Cys-85–Thr-303.

The protein belongs to the radical SAM superfamily. Lipoyl synthase family. [4Fe-4S] cluster serves as cofactor.

The protein resides in the cytoplasm. The enzyme catalyses [[Fe-S] cluster scaffold protein carrying a second [4Fe-4S](2+) cluster] + N(6)-octanoyl-L-lysyl-[protein] + 2 oxidized [2Fe-2S]-[ferredoxin] + 2 S-adenosyl-L-methionine + 4 H(+) = [[Fe-S] cluster scaffold protein] + N(6)-[(R)-dihydrolipoyl]-L-lysyl-[protein] + 4 Fe(3+) + 2 hydrogen sulfide + 2 5'-deoxyadenosine + 2 L-methionine + 2 reduced [2Fe-2S]-[ferredoxin]. The protein operates within protein modification; protein lipoylation via endogenous pathway; protein N(6)-(lipoyl)lysine from octanoyl-[acyl-carrier-protein]: step 2/2. Catalyzes the radical-mediated insertion of two sulfur atoms into the C-6 and C-8 positions of the octanoyl moiety bound to the lipoyl domains of lipoate-dependent enzymes, thereby converting the octanoylated domains into lipoylated derivatives. The protein is Lipoyl synthase of Delftia acidovorans (strain DSM 14801 / SPH-1).